The following is a 55-amino-acid chain: ATP synthase protein 8 (55 aa).

The helical transmembrane segment at 4-24 (LDPAPWFSMLTVSWLIIFLLI) threads the bilayer.

Belongs to the ATPase protein 8 family. F-type ATPases have 2 components, CF(1) - the catalytic core - and CF(0) - the membrane proton channel.

It is found in the mitochondrion membrane. Its function is as follows. Mitochondrial membrane ATP synthase (F(1)F(0) ATP synthase or Complex V) produces ATP from ADP in the presence of a proton gradient across the membrane which is generated by electron transport complexes of the respiratory chain. F-type ATPases consist of two structural domains, F(1) - containing the extramembraneous catalytic core and F(0) - containing the membrane proton channel, linked together by a central stalk and a peripheral stalk. During catalysis, ATP synthesis in the catalytic domain of F(1) is coupled via a rotary mechanism of the central stalk subunits to proton translocation. Part of the complex F(0) domain. Minor subunit located with subunit a in the membrane. The sequence is that of ATP synthase protein 8 (MT-ATP8) from Petromyzon marinus (Sea lamprey).